Here is a 494-residue protein sequence, read N- to C-terminus: Cytochrome P450 2A3 (494 aa).

Residue serine 131 is modified to Phosphoserine. Lysine 379 carries the N6-acetyllysine modification. Position 439 (cysteine 439) interacts with heme.

This sequence belongs to the cytochrome P450 family. Heme serves as cofactor. As to expression, lung.

The protein localises to the endoplasmic reticulum membrane. Its subcellular location is the microsome membrane. It catalyses the reaction an organic molecule + reduced [NADPH--hemoprotein reductase] + O2 = an alcohol + oxidized [NADPH--hemoprotein reductase] + H2O + H(+). Functionally, cytochromes P450 are a group of heme-thiolate monooxygenases. In liver microsomes, this enzyme is involved in an NADPH-dependent electron transport pathway. It oxidizes a variety of structurally unrelated compounds, including steroids, fatty acids, and xenobiotics. This is Cytochrome P450 2A3 (Cyp2a3) from Rattus norvegicus (Rat).